Consider the following 270-residue polypeptide: Glucosamine-6-phosphate deaminase (270 aa).

Catalysis depends on D72, which acts as the Proton acceptor; for enolization step. D141 (for ring-opening step) is an active-site residue. H143 serves as the catalytic Proton acceptor; for ring-opening step. E148 functions as the For ring-opening step in the catalytic mechanism.

This sequence belongs to the glucosamine/galactosamine-6-phosphate isomerase family. NagB subfamily.

The catalysed reaction is alpha-D-glucosamine 6-phosphate + H2O = beta-D-fructose 6-phosphate + NH4(+). Its pathway is amino-sugar metabolism; N-acetylneuraminate degradation; D-fructose 6-phosphate from N-acetylneuraminate: step 5/5. Allosterically activated by N-acetylglucosamine 6-phosphate (GlcNAc6P). Functionally, catalyzes the reversible isomerization-deamination of glucosamine 6-phosphate (GlcN6P) to form fructose 6-phosphate (Fru6P) and ammonium ion. In Parabacteroides distasonis (strain ATCC 8503 / DSM 20701 / CIP 104284 / JCM 5825 / NCTC 11152), this protein is Glucosamine-6-phosphate deaminase.